A 1910-amino-acid polypeptide reads, in one-letter code: MVRVRADLQCFNPRDYQVELLDKATKKNTIVQLGTGSGKTFIAVLLLKEYGVQLFAPLDQGGKRAFFVVEKVNLVEQQAIHIEVHTSFKVGQVHGQTSSGLWDSKEQCDQFMKRHHVVVITAQCLLDLIRHAYLKIEDMCVLIFDECHHALGSQHPYRSIMVDYKLLKKDKPVPRVLGLTASLIKAKVAPEKLMEQLKKLESAMDSVIETASDLVSLSKYGAKPYEVVIICKDFEIGCLGIPNFDTVIEIFDETVAFVNTTTEFHPDLDLDPRRPIKDSLKTTRAVFRQLGPWAAWRTAQVWEKELGKIIKSQVLPDKTLRFLNMAKTSMITIKRLLEPEMKKIKSIEALRPYVPQRVIRLFEILETFNPEFQKERMKLEKAEHLSAIIFVDQRYIAYSLLLMMRHIKSWEPKFKFVNPDYVVGASGRNLASSDSQGLHKRQTEVLRRFHRNEINCLIATSVLEEGVDVKQCNLVIKFDRPLDMRSYVQSKGRARRAGSRYVITVEEKDTAACDSDLKDFQQIEKILLSRHRTVNNPIEDDSDRFEEFDVDSQMEPYVVEKTGATLKMSTAIALINRYCSKLPSDIFTRLVPHNQIIPIEENGVTKYCAELLLPINSPIKHAIVLKNPMPNKKTAQMAVALEACRQLHLEGELDDNLLPKGRESIAKLLEHIDEEPDEYAPGIAAKVGSSKRKQLYDKKIARALNESFVEADKECFIYAFELERFREAELTLNPKRRKFEDPFNYEYCFGFLSAKEIPKIPPFPVFLRQGNMKVRLIVAPKKTTVTAAQLQEIQLFHNYLFTQVLQMCKTGNLEFDGTSNAPLNTLIVPLNKRKDDMSYTINMKYVSEVVANMENMPRIPKDEVRRQYKFNAEDYKDAIVMPWYRNLEQPVFYYVAEILPEWRPSSKFPDTHFETFNEYFIKKYKLEIYDQNQSLLDVDFTSTRLNLLQPRIQNQPRRSRTVSNSSTSNIPQASASDSKESNTSVPHSSQRQILVPELMDIHPISATLWNVIAALPSIFYRVNQLLLTDELRETILVKAFGKEKTKLDDNVEWNSLAYATEYEEKQTIIVKKIQQLRDLNQKSIEDQERETRENDKIDDGEELFNIGVWDPEEAVRIGVEISSRDDRMDGEDQDTVGLTQGLHDGNISDEDDELPFVMHDYTARLTSNRNGIGAWSGSESIVPSGWGDWDGPEPDNSPMPFQILGGPGGLNVQALMADVGRVFDPSTASSSLSQTVQESTVSPPKQLTKEEEQFKKLQNDLLKQAKERLEALEMSEDMEKPRRLEDTVNLEDYGDDQENQEDENTPTNFPKTIDEEIEELSIGARKKQEIDDNAAKTDVLERENCEVLPVAINEKSRSFSFEKESKAINGRLIRQRSEEYVSHIDSDIGLGVSPCLLLTALTTSNAADGMSLERFETIGDSFLKFATTDYLYHTLLDQHEGKLSFARSKEVSNCNLYRLGKKLGIPQLIVANKFDAHDSWLPPCYIPTCDFKAPNTDDAEEKDNEIERILDGQVIEEKPENKTGWDIGGDVSKSTTDGIETITFPKQARVGNDDISPLPYNLLTQQHISDKSIADAVEALIGVHLLTLGPNPTLKVMNWMGLKVIQKDQKSDVPSPLLRFIDTPTNPNASLNFLNNLWQQFQFTQLEEKIGYRFKERAYLVQAFTHASYINNRVTGCYQRLEFLGDAVLDYMITRYLFEDSRQYSPGVLTDLRSALVNNTIFASLAVKFEFQKHFIAMCPGLYHMIEKFVKLCSERNFDTNFNAEMYMVTTEEEIDEGQEEDIEVPKAMGDIFESVAGAIYLDSGRNLDTTWQVIFHMMRGTIELCCANPPRSPIRELMEFEQSKVRFSKMERILESGKVRVTVEVVNNMRFTGMGRNYRIAKATAAKRALKYLHQIEQQRRQSPSLTTV.

Positions 20–201 constitute a Helicase ATP-binding domain; that stretch reads LLDKATKKNT…KLMEQLKKLE (182 aa). ATP is bound at residue 33–40; the sequence is LGTGSGKT. A DEAH box motif is present at residues 145-148; it reads DECH. A Helicase C-terminal domain is found at 371–542; it reads EFQKERMKLE…TVNNPIEDDS (172 aa). The 97-residue stretch at 571 to 667 folds into the Dicer dsRNA-binding fold domain; it reads AIALINRYCS…LPKGRESIAK (97 aa). Residues 845 to 1003 form the PAZ domain; sequence YVSEVVANME…LVPELMDIHP (159 aa). Disordered stretches follow at residues 951–988, 1227–1248, and 1272–1309; these read RIQN…VPHS, TASS…KQLT, and LEMS…PTNF. Composition is skewed to polar residues over residues 970–988 and 1227–1245; these read IPQA…VPHS and TASS…SPPK. Residues 1245-1280 are a coiled coil; it reads KQLTKEEEQFKKLQNDLLKQAKERLEALEMSEDMEK. A compositionally biased stretch (basic and acidic residues) spans 1272-1286; it reads LEMSEDMEKPRRLED. Positions 1288–1304 are enriched in acidic residues; that stretch reads VNLEDYGDDQENQEDEN. RNase III domains lie at 1381–1589 and 1643–1805; these read VSHI…LTLG and FTQL…LDSG. The Mg(2+) site is built by glutamate 1682, aspartate 1791, and glutamate 1794. In terms of domain architecture, DRBM spans 1833-1896; that stretch reads SPIRELMEFE…AKRALKYLHQ (64 aa).

Belongs to the helicase family. Dicer subfamily. Component of the ERI/DICER complex at least composed of dcr-1, rrf-3 and eri-1. Interacts with pir-1. Mg(2+) is required as a cofactor. Mn(2+) serves as cofactor.

Functionally, component of the ERI/DICER complex which is involved in processing amplified double-stranded RNA (dsRNA) intermediates during small-RNA-mediated gene-silencing or RNA interference (RNAi). Involved in cleaving dsRNA in the RNAi pathway. It produces 21 to 23 bp dsRNAs (siRNAs) which target the selective destruction of homologous RNAs. Seems to process the precursor of the small temporal RNA let-7 which is involved in developmental timing. Required for avoidance behavior induced by small RNAs derived from pathogenic bacteria such as P.aeruginosa. Involved in innate immunity through its role in small RNA processing. In terms of biological role, tDCR-1 acts as a deoxyribonuclease (DNase) initiating DNA fragmentation during apoptosis, upstream of nucleases cps-6, crn-2 and nuc-1. The polypeptide is Endoribonuclease dcr-1 (Caenorhabditis elegans).